The following is a 292-amino-acid chain: Xanthine dehydrogenase FAD-binding subunit (292 aa).

One can recognise an FAD-binding PCMH-type domain in the interval Met-1 to Lys-176. FAD contacts are provided by residues Lys-27–Asp-34, Ala-109–Gly-113, Ile-165, and Phe-184.

Heterotrimer of XdhA, XdhB and XdhC. FAD is required as a cofactor.

It carries out the reaction xanthine + NAD(+) + H2O = urate + NADH + H(+). The enzyme catalyses hypoxanthine + NAD(+) + H2O = xanthine + NADH + H(+). Its pathway is purine metabolism; hypoxanthine degradation; urate from hypoxanthine: step 1/2. The protein operates within purine metabolism; hypoxanthine degradation; urate from hypoxanthine: step 2/2. Presumed to be a dehydrogenase, but possibly an oxidase. Participates in limited purine salvage (requires aspartate) but does not support aerobic growth on purines as the sole carbon source (purine catabolism). The chain is Xanthine dehydrogenase FAD-binding subunit (xdhB) from Escherichia coli O157:H7.